The primary structure comprises 276 residues: 2-dehydro-3-deoxyphosphooctonate aldolase (276 aa).

The protein belongs to the KdsA family.

The protein resides in the cytoplasm. The enzyme catalyses D-arabinose 5-phosphate + phosphoenolpyruvate + H2O = 3-deoxy-alpha-D-manno-2-octulosonate-8-phosphate + phosphate. The protein operates within carbohydrate biosynthesis; 3-deoxy-D-manno-octulosonate biosynthesis; 3-deoxy-D-manno-octulosonate from D-ribulose 5-phosphate: step 2/3. This chain is 2-dehydro-3-deoxyphosphooctonate aldolase, found in Stenotrophomonas maltophilia (strain K279a).